Consider the following 963-residue polypeptide: MAAPSELQLYPSVIHPAIQKYWDEFCELPAETLSAFSSYYPDILRAFAVSDFLALNILREPELVLSFLQSSQHQKECQLVDFRAPLAEELSGALKEDDLLRILRLFRRRMMFRIIWRDLVCLVDYQVTTREVSWLAETCIDEALSWIYRDMSQQFGEPHSTAGVKQQLVVLAMGKLGANELNVSSDIDLIFTFPERGETQGGNRSLDNQAFFTRLGQRLIQALDNTTADGFVFRVDMRLRPYGQSGALALSFAAMEAYYQEQGRDWERYAMIKARAVAGDIDAGEELLTSLKPFVYRKYIDFGAVQALRAMKEMIEREVQRKGQDGNIKVGRGGIREIEFIVQVFQLMRGGRDVRLQQRNLLSTLECLEDEGLLPVAAAAELREAYIFLRNLEHAIQGLEDKQTQEIPKDEEGRERVAVAMGFPGWGACRVQLDKYRDCVSEHFADIIAERREAPLERPDTIEWKALWAGRLAQDEAQDLLLRSGCDQAQEIYEAVTQLRQSSRVQHMQLQGKERLDEFMPNLLQSLAQSRASHETCRRLLALVEAVLRRSAYLALLNENPGALTELIRLFAESAWIARQIVTTPLLLDELLHSGSLYTPPDTTALRDELRQQMLRIPNDDLEEQMEALRYFKKAHVLRVAASDLRETLPLMKVSDYLTFIAETIIEQVVDEAWETMVKKYGEPGYEDAALNDMRFAVIGYGKLGGIEMSYGSDLDLVFLHGASGDLSTSGETSIANQVFFTRLGQRIIHLLTTKTASGDIYEVDMRLRPSGNSGLLVSSVSAFQQYQEKSAWTWEHQALVRSRAVAGCPGIRAEFEKVRKDILTQHRDPAKLRTEVMDMREKMHASLGTKPDSSGSPPYFDLKHDRGGIVDIEFMVQYAALRWANEYPQIVVWSDNIRILEALGDAGVFSQEDADKLCDIYRLLRAHGHRLALQNLPARIQTDELLEERRWVVAFWEKVFAE.

Residues 1–451 (MAAPSELQLY…EHFADIIAER (451 aa)) are adenylyl removase. The tract at residues 461 to 963 (TIEWKALWAG…VAFWEKVFAE (503 aa)) is adenylyl transferase.

Belongs to the GlnE family. Requires Mg(2+) as cofactor.

The enzyme catalyses [glutamine synthetase]-O(4)-(5'-adenylyl)-L-tyrosine + phosphate = [glutamine synthetase]-L-tyrosine + ADP. It carries out the reaction [glutamine synthetase]-L-tyrosine + ATP = [glutamine synthetase]-O(4)-(5'-adenylyl)-L-tyrosine + diphosphate. Its function is as follows. Involved in the regulation of glutamine synthetase GlnA, a key enzyme in the process to assimilate ammonia. When cellular nitrogen levels are high, the C-terminal adenylyl transferase (AT) inactivates GlnA by covalent transfer of an adenylyl group from ATP to specific tyrosine residue of GlnA, thus reducing its activity. Conversely, when nitrogen levels are low, the N-terminal adenylyl removase (AR) activates GlnA by removing the adenylyl group by phosphorolysis, increasing its activity. The regulatory region of GlnE binds the signal transduction protein PII (GlnB) which indicates the nitrogen status of the cell. In Hahella chejuensis (strain KCTC 2396), this protein is Bifunctional glutamine synthetase adenylyltransferase/adenylyl-removing enzyme.